Reading from the N-terminus, the 470-residue chain is Uronate isomerase (470 aa).

This sequence belongs to the metallo-dependent hydrolases superfamily. Uronate isomerase family.

The enzyme catalyses D-glucuronate = D-fructuronate. The catalysed reaction is aldehydo-D-galacturonate = keto-D-tagaturonate. It participates in carbohydrate metabolism; pentose and glucuronate interconversion. This chain is Uronate isomerase, found in Klebsiella pneumoniae (strain 342).